The following is a 63-amino-acid chain: Large ribosomal subunit protein uL29 (63 aa).

Belongs to the universal ribosomal protein uL29 family.

This chain is Large ribosomal subunit protein uL29, found in Psychromonas ingrahamii (strain DSM 17664 / CCUG 51855 / 37).